A 74-amino-acid polypeptide reads, in one-letter code: MTISGSFSSFGTTNSLNVKNNQNHFLSTSPNLNGNSILSSSFGGSSSFQNSNYLIASVNSTVITESFKLLDNPW.

This is an uncharacterized protein from Dictyostelium discoideum (Social amoeba).